Reading from the N-terminus, the 126-residue chain is Histone H2B type 1-M (126 aa).

Positions 1-36 (MPEPVKSAPVPKKGSKKAINKAQKKDGKKRKRSRKE) are disordered. An N-acetylproline modification is found at Pro2. Glu3 is subject to ADP-ribosyl glutamic acid. Lys6 is subject to N6-(2-hydroxyisobutyryl)lysine; alternate. Position 6 is an N6-(beta-hydroxybutyryl)lysine; alternate (Lys6). The residue at position 6 (Lys6) is an N6-acetyllysine; alternate. Lys6 bears the N6-butyryllysine; alternate mark. N6-crotonyllysine; alternate is present on Lys6. An N6-lactoyllysine; alternate modification is found at Lys6. Lys6 is covalently cross-linked (Glycyl lysine isopeptide (Lys-Gly) (interchain with G-Cter in SUMO2); alternate). Ser7 carries the post-translational modification ADP-ribosylserine. Position 12 is an N6-(beta-hydroxybutyryl)lysine; alternate (Lys12). Residues Lys12 and Lys13 each carry the N6-acetyllysine; alternate modification. N6-crotonyllysine; alternate is present on residues Lys12 and Lys13. An N6-lactoyllysine; alternate modification is found at Lys12. Lys13 is subject to N6-(2-hydroxyisobutyryl)lysine; alternate. Position 15 is a phosphoserine; by STK4/MST1 (Ser15). N6-acetyllysine; alternate occurs at positions 16, 17, 21, and 24. Lys16, Lys17, Lys21, and Lys24 each carry N6-crotonyllysine; alternate. N6-lactoyllysine; alternate is present on residues Lys16, Lys17, Lys21, and Lys24. An N6-(beta-hydroxybutyryl)lysine; alternate mark is found at Lys17 and Lys21. Lys17 is subject to N6-glutaryllysine; alternate. 2 positions are modified to N6-(2-hydroxyisobutyryl)lysine; alternate: Lys21 and Lys24. Residue Lys21 is modified to N6-butyryllysine; alternate. Lys21 is covalently cross-linked (Glycyl lysine isopeptide (Lys-Gly) (interchain with G-Cter in SUMO2); alternate). Lys25 carries the post-translational modification N6-(2-hydroxyisobutyryl)lysine. Lys35 is modified (N6-(2-hydroxyisobutyryl)lysine; alternate). Lys35 is subject to N6-(beta-hydroxybutyryl)lysine; alternate. Lys35 is subject to N6-crotonyllysine; alternate. Position 35 is an N6-glutaryllysine; alternate (Lys35). N6-succinyllysine; alternate is present on Lys35. Residue Lys35 forms a Glycyl lysine isopeptide (Lys-Gly) (interchain with G-Cter in ubiquitin); alternate linkage. PolyADP-ribosyl glutamic acid is present on Glu36. The residue at position 37 (Ser37) is a Phosphoserine; by AMPK. N6-(2-hydroxyisobutyryl)lysine; alternate occurs at positions 44, 47, and 58. Lys44 carries the post-translational modification N6-lactoyllysine; alternate. Lys44 and Lys47 each carry N6-glutaryllysine; alternate. Lys47 carries the post-translational modification N6-methyllysine; alternate. Position 58 is an N6,N6-dimethyllysine; alternate (Lys58). Arg80 carries the dimethylated arginine modification. Lys86 carries the post-translational modification N6-(2-hydroxyisobutyryl)lysine; alternate. Lys86 carries the N6-(beta-hydroxybutyryl)lysine; alternate modification. N6-acetyllysine; alternate is present on Lys86. At Lys86 the chain carries N6-lactoyllysine; alternate. Lys86 is modified (N6,N6,N6-trimethyllysine; alternate). 2 positions are modified to omega-N-methylarginine: Arg87 and Arg93. Lys109 is subject to N6-(2-hydroxyisobutyryl)lysine; alternate. Lys109 carries the post-translational modification N6-lactoyllysine; alternate. N6-glutaryllysine; alternate is present on Lys109. The residue at position 109 (Lys109) is an N6-methyllysine; alternate. O-linked (GlcNAc) serine glycosylation occurs at Ser113. Thr116 bears the Phosphothreonine mark. Lys117 and Lys121 each carry N6-(2-hydroxyisobutyryl)lysine; alternate. 2 positions are modified to N6-(beta-hydroxybutyryl)lysine; alternate: Lys117 and Lys121. Residues Lys117 and Lys121 each carry the N6-lactoyllysine; alternate modification. 2 positions are modified to N6-glutaryllysine; alternate: Lys117 and Lys121. Lys117 and Lys121 each carry N6-succinyllysine; alternate. An N6-malonyllysine; alternate modification is found at Lys117. Lys117 carries the N6-methylated lysine; alternate modification. Lys121 participates in a covalent cross-link: Glycyl lysine isopeptide (Lys-Gly) (interchain with G-Cter in ubiquitin); alternate.

The protein belongs to the histone H2B family. As to quaternary structure, the nucleosome is a histone octamer containing two molecules each of H2A, H2B, H3 and H4 assembled in one H3-H4 heterotetramer and two H2A-H2B heterodimers. The octamer wraps approximately 147 bp of DNA. Post-translationally, monoubiquitination at Lys-35 (H2BK34Ub) by the MSL1/MSL2 dimer is required for histone H3 'Lys-4' (H3K4me) and 'Lys-79' (H3K79me) methylation and transcription activation at specific gene loci, such as HOXA9 and MEIS1 loci. Similarly, monoubiquitination at Lys-121 (H2BK120Ub) by the RNF20/40 complex gives a specific tag for epigenetic transcriptional activation and is also prerequisite for histone H3 'Lys-4' and 'Lys-79' methylation. It also functions cooperatively with the FACT dimer to stimulate elongation by RNA polymerase II. H2BK120Ub also acts as a regulator of mRNA splicing: deubiquitination by USP49 is required for efficient cotranscriptional splicing of a large set of exons. In terms of processing, phosphorylation at Ser-37 (H2BS36ph) by AMPK in response to stress promotes transcription. Phosphorylated on Ser-15 (H2BS14ph) by STK4/MST1 during apoptosis; which facilitates apoptotic chromatin condensation. Also phosphorylated on Ser-15 in response to DNA double strand breaks (DSBs), and in correlation with somatic hypermutation and immunoglobulin class-switch recombination. GlcNAcylation at Ser-113 promotes monoubiquitination of Lys-121. It fluctuates in response to extracellular glucose, and associates with transcribed genes. Post-translationally, ADP-ribosylated by PARP1 or PARP2 on Ser-7 (H2BS6ADPr) in response to DNA damage. H2BS6ADPr promotes recruitment of CHD1L. Mono-ADP-ribosylated on Glu-3 (H2BE2ADPr) by PARP3 in response to single-strand breaks. Poly ADP-ribosylation on Glu-36 (H2BE35ADPr) by PARP1 regulates adipogenesis: it inhibits phosphorylation at Ser-37 (H2BS36ph), thereby blocking expression of pro-adipogenetic genes. In terms of processing, crotonylation (Kcr) is specifically present in male germ cells and marks testis-specific genes in post-meiotic cells, including X-linked genes that escape sex chromosome inactivation in haploid cells. Crotonylation marks active promoters and enhancers and confers resistance to transcriptional repressors. It is also associated with post-meiotically activated genes on autosomes. Lactylated in macrophages by EP300/P300 by using lactoyl-CoA directly derived from endogenous or exogenous lactate, leading to stimulates gene transcription.

Its subcellular location is the nucleus. It localises to the chromosome. In terms of biological role, core component of nucleosome. Nucleosomes wrap and compact DNA into chromatin, limiting DNA accessibility to the cellular machineries which require DNA as a template. Histones thereby play a central role in transcription regulation, DNA repair, DNA replication and chromosomal stability. DNA accessibility is regulated via a complex set of post-translational modifications of histones, also called histone code, and nucleosome remodeling. This Homo sapiens (Human) protein is Histone H2B type 1-M.